The primary structure comprises 41 residues: Large ribosomal subunit protein bL36B (41 aa).

This sequence belongs to the bacterial ribosomal protein bL36 family.

This chain is Large ribosomal subunit protein bL36B, found in Actinobacillus pleuropneumoniae serotype 5b (strain L20).